We begin with the raw amino-acid sequence, 85 residues long: Elicitor peptide 7 (85 aa).

Residues 1-62 (MEGEGRREDG…TEVVNIPRSV (62 aa)) constitute a propeptide that is removed on maturation. A disordered region spans residues 66-85 (NVAARKGKQQTSSGKGGGTN).

It belongs to the brassicaceae elicitor peptide family.

In terms of biological role, elicitor of plant defense. In Arabidopsis thaliana (Mouse-ear cress), this protein is Elicitor peptide 7 (PEP7).